The chain runs to 493 residues: Lysine--tRNA ligase (493 aa).

The short motif at 26–34 is the 'HIGH' region element; sequence PSGHIHLGN. The 'KMSKS' region motif lies at 270 to 274; sequence AMKSS.

The protein belongs to the class-I aminoacyl-tRNA synthetase family.

The protein localises to the cytoplasm. The catalysed reaction is tRNA(Lys) + L-lysine + ATP = L-lysyl-tRNA(Lys) + AMP + diphosphate. The protein is Lysine--tRNA ligase (lysS) of Archaeoglobus fulgidus (strain ATCC 49558 / DSM 4304 / JCM 9628 / NBRC 100126 / VC-16).